The following is a 180-amino-acid chain: DNA-directed RNA polymerase subunit Rpo7 (180 aa).

One can recognise an S1 motif domain in the interval 82-165 (QEVVEGEVLQ…RLPRIALTMR (84 aa)).

Belongs to the eukaryotic RPB7/RPC8 RNA polymerase subunit family. In terms of assembly, part of the 13-subunit RNA polymerase complex. Forms a stalk with Rpo4 that extends from the main structure.

It is found in the cytoplasm. It catalyses the reaction RNA(n) + a ribonucleoside 5'-triphosphate = RNA(n+1) + diphosphate. Functionally, DNA-dependent RNA polymerase (RNAP) catalyzes the transcription of DNA into RNA using the four ribonucleoside triphosphates as substrates. The protein is DNA-directed RNA polymerase subunit Rpo7 of Saccharolobus solfataricus (strain ATCC 35092 / DSM 1617 / JCM 11322 / P2) (Sulfolobus solfataricus).